The chain runs to 1675 residues: Clathrin heavy chain 1 (1675 aa).

N-acetylalanine is present on A2. The interval 2–479 is globular terminal domain; the sequence is AQILPIRFQE…VDPTLALSVY (478 aa). WD40-like repeat stretches follow at residues 24-67, 68-107, 108-149, 150-195, 196-257, 258-301, and 302-330; these read NIGF…RPIS, ADSAIMNPASKVIALKAGKTLQIFNIEMKSKMKAHTMTDD, VTFW…SSLA, GCQI…QPIE, GHAA…PEAQ, NDFP…ISGE, and TIFVTAPHEATAGIIGVNRKGQVLSVCVE. The residue at position 67 (S67) is a Phosphoserine. Phosphothreonine is present on T105. Y184 carries the post-translational modification Phosphotyrosine. Phosphothreonine is present on T394. The binding site for the uncoating ATPase, involved in lattice disassembly stretch occupies residues 449–465; it reads EKWLKEDKLECSEELGD. A flexible linker region spans residues 480 to 523; sequence LRANVPNKVIQCFAETGQVQKIVLYAKKVGYTPDWIFLLRNVMR. Residues 524 to 634 are distal segment; the sequence is ISPDQGQQFA…RALEHFTDLY (111 aa). Residues 524 to 1675 form a heavy chain arm region; that stretch reads ISPDQGQQFA…QPQPGFGYSM (1152 aa). 7 CHCR repeats span residues 537-683, 686-828, 833-972, 979-1124, 1128-1269, 1274-1420, and 1423-1566; these read VQDE…QICV, ASKY…SEDV, ILVV…PLID, LSET…VKEA, YIKA…FRLA, LHIV…LLLN, and LMVL…RECF. A Phosphotyrosine modification is found at Y634. A proximal segment region spans residues 639–1675; it reads AVVHTHLLNP…QPQPGFGYSM (1037 aa). K737 bears the N6-succinyllysine mark. K856 is subject to N6-acetyllysine. Y899 carries the phosphotyrosine modification. S1167 carries the phosphoserine modification. The residue at position 1206 (Y1206) is a Phosphotyrosine. The tract at residues 1213 to 1522 is involved in binding clathrin light chain; sequence AAKLLYNNVS…YLFKGNNRWK (310 aa). At S1229 the chain carries Phosphoserine. K1441 is subject to N6-acetyllysine; alternate. The residue at position 1441 (K1441) is an N6-succinyllysine; alternate. Y1477 and Y1487 each carry phosphotyrosine. S1494 carries the phosphoserine modification. An N6-acetyllysine modification is found at K1501. Positions 1550–1675 are trimerization; it reads AEELLQWFLQ…QPQPGFGYSM (126 aa).

This sequence belongs to the clathrin heavy chain family. As to quaternary structure, clathrin triskelions, composed of 3 heavy chains and 3 light chains, are the basic subunits of the clathrin coat. In the presence of light chains, hub assembly is influenced by both the pH and the concentration of calcium. Interacts with HIP1. Interacts with DENND1A, DENND1B and DENND1C. Interacts with ERBB2. Interacts with FKBP6. Interacts with OCRL. Interacts with CKAP5 and TACC3 forming the TACC3/ch-TOG/clathrin complex located at spindle inter-microtubules bridges; the complex implicates clathrin triskelions; TACC3 and CLTC are proposed to form a composite microtubule interaction surface. Plays a role in early autophagosome formation. Interacts with ATG16L1 (via N-terminus). Interacts with RFTN1; the interaction occurs in response to pathogens. Interacts with USP2 isoform 2. Interacts with TMEM106B (via N-terminus). Interacts with DNAJC6; this interaction produces a local change in heavy-chain contacts, creating a detectable global distortion of the clathrin coat and leads to the recruitment of HSPA8.

The protein localises to the cytoplasmic vesicle membrane. It localises to the membrane. Its subcellular location is the coated pit. It is found in the melanosome. The protein resides in the cytoplasm. The protein localises to the cytoskeleton. It localises to the spindle. Functionally, clathrin is the major protein of the polyhedral coat of coated pits and vesicles. Two different adapter protein complexes link the clathrin lattice either to the plasma membrane or to the trans-Golgi network. Acts as a component of the TACC3/ch-TOG/clathrin complex proposed to contribute to stabilization of kinetochore fibers of the mitotic spindle by acting as inter-microtubule bridge. The TACC3/ch-TOG/clathrin complex is required for the maintenance of kinetochore fiber tension. Plays a role in early autophagosome formation. Interaction with DNAJC6 mediates the recruitment of HSPA8 to the clathrin lattice and creates local destabilization of the lattice promoting uncoating. The sequence is that of Clathrin heavy chain 1 from Mus musculus (Mouse).